A 398-amino-acid polypeptide reads, in one-letter code: 1-deoxy-D-xylulose 5-phosphate reductoisomerase (398 aa).

Residues Thr10, Gly11, Ser12, Ile13, Gly36, Arg37, Asn38, and Asn124 each coordinate NADPH. Residue Lys125 coordinates 1-deoxy-D-xylulose 5-phosphate. NADPH is bound at residue Glu126. Asp150 provides a ligand contact to Mn(2+). Ser151, Glu152, Ser186, and His209 together coordinate 1-deoxy-D-xylulose 5-phosphate. Residue Glu152 coordinates Mn(2+). Residue Gly215 coordinates NADPH. 1-deoxy-D-xylulose 5-phosphate-binding residues include Ser222, Asn227, Lys228, and Glu231. Glu231 contacts Mn(2+).

This sequence belongs to the DXR family. Homodimer. Mg(2+) serves as cofactor. Requires Mn(2+) as cofactor.

The enzyme catalyses 2-C-methyl-D-erythritol 4-phosphate + NADP(+) = 1-deoxy-D-xylulose 5-phosphate + NADPH + H(+). It functions in the pathway isoprenoid biosynthesis; isopentenyl diphosphate biosynthesis via DXP pathway; isopentenyl diphosphate from 1-deoxy-D-xylulose 5-phosphate: step 1/6. Catalyzes the NADPH-dependent rearrangement and reduction of 1-deoxy-D-xylulose-5-phosphate (DXP) to 2-C-methyl-D-erythritol 4-phosphate (MEP). The chain is 1-deoxy-D-xylulose 5-phosphate reductoisomerase from Yersinia pseudotuberculosis serotype IB (strain PB1/+).